The following is a 230-amino-acid chain: Eukaryotic translation initiation factor 4E-1 (230 aa).

The interval methionine 1–asparagine 53 is disordered. A compositionally biased stretch (polar residues) spans lysine 8–arginine 19. Acidic residues predominate over residues asparagine 22–aspartate 38. A compositionally biased stretch (low complexity) spans alanine 39–alanine 49. EIF4G-binding stretches follow at residues histidine 55–glutamate 58 and phenylalanine 65–histidine 101. MRNA-binding positions include lysine 73 to glycine 78, lysine 105, and tryptophan 123 to glutamate 124. Cysteine 128 and cysteine 166 are joined by a disulfide. An EIF4G-binding region spans residues tyrosine 149–glutamine 158. Residues arginine 173 to lysine 178 and lysine 218 to arginine 222 each bind mRNA.

This sequence belongs to the eukaryotic initiation factor 4E family. EIF4F is a multi-subunit complex, the composition of which varies with external and internal environmental conditions. It is composed of at least EIF4A, EIF4E and EIF4G. EIF4E is also known to interact with other partners. In higher plants two isoforms of EIF4F have been identified, named isoform EIF4F and isoform EIF(iso)4F. Isoform EIF4F has subunits p220 and p26, whereas isoform EIF(iso)4F has subunits p82 and p28. In terms of assembly, (Microbial infection) Interacts with potyvirus viral genome-linked protein (VPg); this interaction is possible in susceptible hosts but impaired in resistant plants. In terms of processing, according to the redox status, the Cys-128-Cys-166 disulfide bridge may have a role in regulating protein function by affecting its ability to bind capped mRNA.

It localises to the nucleus. The protein localises to the cytoplasm. Functionally, component of the protein complex eIF4F, which is involved in the recognition of the mRNA cap, ATP-dependent unwinding of 5'-terminal secondary structure and recruitment of mRNA to the ribosome. Recognizes and binds the 7-methylguanosine-containing mRNA cap during an early step in the initiation of protein synthesis and facilitates ribosome binding by inducing the unwinding of the mRNAs secondary structures. Key component of recessive resistance to potyviruses. In terms of biological role, (Microbial infection) Susceptibility host factor required for viral infection by recruiting viral RNAs to the host ribosomal complex via an interaction with viral genome-linked protein (VPg). This is Eukaryotic translation initiation factor 4E-1 from Phaseolus vulgaris (Kidney bean).